Reading from the N-terminus, the 379-residue chain is MYNINQSTDTKEAAAIEARRNREKERQNRFFNVRNRVMGVDVQALNNQVGDRKLREAAERSKEAAYGTSQVQYDVVVQMLEKEEADRTRRLAKKVQEFREQKQQLKNGREFSLWDPDQVWKGLPTYLSYSNTYPGPASLQYFSGEDLDRATRLRMQQGQFRYNLERQQQEQQQAKVDENCADALSNQLRLAMDAQATHLARLEESCRAAMMCAMANANKAQAAVQAGRQRCERQREQKANLAEIRHQSTSDLLTENPQVAQHRTAPHRVLPYCWKGMTPEQRAAIRKEQEVQRSKKEAHRQAEKTLDTEWKSQTMSSAQALLELEEQERELCAVFQRGLGSFNQQLANEQKAQQDYLNSVIYTNQPTAQYHRQFNTSSR.

The disordered stretch occupies residues 1 to 21 (MYNINQSTDTKEAAAIEARRN). Residues 9 to 21 (DTKEAAAIEARRN) show a composition bias toward basic and acidic residues. 3 coiled-coil regions span residues 85 to 111 (ADRTRRLAKKVQEFREQKQQLKNGREF), 161 to 241 (RYNL…KANL), and 280 to 304 (EQRAAIRKEQEVQRSKKEAHRQAEK).

It belongs to the RIB43A family. As to quaternary structure, microtubule inner protein component of sperm flagellar doublet microtubules.

Its subcellular location is the cytoplasm. The protein localises to the cytoskeleton. The protein resides in the flagellum axoneme. The polypeptide is RIB43A-like with coiled-coils protein 1 (RIBC1) (Macaca fascicularis (Crab-eating macaque)).